The sequence spans 89 residues: Small ribosomal subunit protein uS15 (89 aa).

It belongs to the universal ribosomal protein uS15 family. As to quaternary structure, part of the 30S ribosomal subunit. Forms a bridge to the 50S subunit in the 70S ribosome, contacting the 23S rRNA.

Functionally, one of the primary rRNA binding proteins, it binds directly to 16S rRNA where it helps nucleate assembly of the platform of the 30S subunit by binding and bridging several RNA helices of the 16S rRNA. Its function is as follows. Forms an intersubunit bridge (bridge B4) with the 23S rRNA of the 50S subunit in the ribosome. This is Small ribosomal subunit protein uS15 from Ralstonia nicotianae (strain ATCC BAA-1114 / GMI1000) (Ralstonia solanacearum).